Reading from the N-terminus, the 360-residue chain is Methionine import ATP-binding protein MetN (360 aa).

Positions 1 to 22 (MSHTASTPTPEEYSAQQPSTQG) are disordered. The ABC transporter domain maps to 25 to 265 (VEFRGITKVF…PQTQVAQKFV (241 aa)). 62–69 (GYSGAGKS) is a binding site for ATP.

The protein belongs to the ABC transporter superfamily. Methionine importer (TC 3.A.1.24) family. In terms of assembly, the complex is composed of two ATP-binding proteins (MetN), two transmembrane proteins (MetI) and a solute-binding protein (MetQ).

Its subcellular location is the cell membrane. It catalyses the reaction L-methionine(out) + ATP + H2O = L-methionine(in) + ADP + phosphate + H(+). The catalysed reaction is D-methionine(out) + ATP + H2O = D-methionine(in) + ADP + phosphate + H(+). In terms of biological role, part of the ABC transporter complex MetNIQ involved in methionine import. Responsible for energy coupling to the transport system. The chain is Methionine import ATP-binding protein MetN from Corynebacterium glutamicum (strain ATCC 13032 / DSM 20300 / JCM 1318 / BCRC 11384 / CCUG 27702 / LMG 3730 / NBRC 12168 / NCIMB 10025 / NRRL B-2784 / 534).